A 355-amino-acid polypeptide reads, in one-letter code: 3-dehydroquinate synthase (355 aa).

NAD(+)-binding positions include 71–76, 105–109, 129–130, Lys142, and Lys151; these read EGEERK, GVVGD, and TS. Zn(2+)-binding residues include Glu184, His246, and His263.

Belongs to the sugar phosphate cyclases superfamily. Dehydroquinate synthase family. The cofactor is Co(2+). Requires Zn(2+) as cofactor. NAD(+) is required as a cofactor.

It is found in the cytoplasm. The enzyme catalyses 7-phospho-2-dehydro-3-deoxy-D-arabino-heptonate = 3-dehydroquinate + phosphate. The protein operates within metabolic intermediate biosynthesis; chorismate biosynthesis; chorismate from D-erythrose 4-phosphate and phosphoenolpyruvate: step 2/7. In terms of biological role, catalyzes the conversion of 3-deoxy-D-arabino-heptulosonate 7-phosphate (DAHP) to dehydroquinate (DHQ). The polypeptide is 3-dehydroquinate synthase (Streptococcus pneumoniae (strain Hungary19A-6)).